The chain runs to 352 residues: Peptide chain release factor 1 (352 aa).

Gln233 bears the N5-methylglutamine mark. The tract at residues 288–309 (NAKDRKEQVGSGDRSERIRTYN) is disordered. Positions 289 to 306 (AKDRKEQVGSGDRSERIR) are enriched in basic and acidic residues.

The protein belongs to the prokaryotic/mitochondrial release factor family. Post-translationally, methylated by PrmC. Methylation increases the termination efficiency of RF1.

It localises to the cytoplasm. Its function is as follows. Peptide chain release factor 1 directs the termination of translation in response to the peptide chain termination codons UAG and UAA. The chain is Peptide chain release factor 1 from Helicobacter pylori (strain Shi470).